Here is a 299-residue protein sequence, read N- to C-terminus: Probable lipid kinase YegS (299 aa).

The DAGKc domain maps to 2–133; sequence AEFPASLLIL…IDMAQVNKQT (132 aa). Residues Thr40, 66–72, and Thr95 contribute to the ATP site; that span reads GDGTINE. Mg(2+) contacts are provided by Leu215, Asp218, and Leu220. Glu271 (proton acceptor) is an active-site residue.

This sequence belongs to the diacylglycerol/lipid kinase family. YegS lipid kinase subfamily. Mg(2+) is required as a cofactor. It depends on Ca(2+) as a cofactor.

It is found in the cytoplasm. Functionally, probably phosphorylates lipids; the in vivo substrate is unknown. The polypeptide is Probable lipid kinase YegS (Shigella flexneri).